Consider the following 303-residue polypeptide: Polyisoprenyl-teichoic acid--peptidoglycan teichoic acid transferase TagU (303 aa).

At 1-4 (MKKK) the chain is on the cytoplasmic side. The chain crosses the membrane as a helical; Signal-anchor for type II membrane protein span at residues 5-25 (ILFWVLGILGVLIIGGGIYAY). The Extracellular portion of the chain corresponds to 26 to 303 (NVYSSVSNTL…KLRSHLEVTK (278 aa)).

It belongs to the LytR/CpsA/Psr (LCP) family.

It localises to the cell membrane. It participates in cell wall biogenesis. Functionally, may catalyze the final step in cell wall teichoic acid biosynthesis, the transfer of the anionic cell wall polymers (APs) from their lipid-linked precursor to the cell wall peptidoglycan (PG). The chain is Polyisoprenyl-teichoic acid--peptidoglycan teichoic acid transferase TagU from Bacillus cereus (strain AH820).